Here is a 184-residue protein sequence, read N- to C-terminus: Signal peptidase complex subunit 3 (184 aa).

The Cytoplasmic segment spans residues 1-14; sequence MFSFVQRFQNVSNQ. A helical; Signal-anchor for type II membrane protein transmembrane segment spans residues 15–35; sequence AFSMGIVMVVFIMASSYYQLI. The Lumenal segment spans residues 36-184; sequence NNNAFSVPSN…TLTVENKNKV (149 aa). Residues Asn-102 and Asn-173 are each glycosylated (N-linked (GlcNAc...) asparagine).

It belongs to the SPCS3 family. As to quaternary structure, component of the signal peptidase complex (SPC) composed of a catalytic subunit SEC11 and three accessory subunits SPC1, SPC2 and SPC3. The complex induces a local thinning of the ER membrane which is used to measure the length of the signal peptide (SP) h-region of protein substrates. This ensures the selectivity of the complex towards h-regions shorter than 18-20 amino acids. Interacts with SEC11. SPC associates with the translocon complex.

It localises to the endoplasmic reticulum membrane. Essential component of the signal peptidase complex (SPC) which catalyzes the cleavage of N-terminal signal sequences from nascent proteins as they are translocated into the lumen of the endoplasmic reticulum. Essential for the SPC catalytic activity, possibly by stabilizing and positioning the active center of the complex close to the lumenal surface. Essential for viability. In Saccharomyces cerevisiae (strain ATCC 204508 / S288c) (Baker's yeast), this protein is Signal peptidase complex subunit 3 (SPC3).